The following is a 475-amino-acid chain: D-lactate dehydrogenase (475 aa).

Residues 43–222 enclose the FAD-binding PCMH-type domain; that stretch reads YGKARPEVLV…TELTLKVIPA (180 aa).

This sequence belongs to the FAD-binding oxidoreductase/transferase type 4 family. It depends on FAD as a cofactor. Requires Zn(2+) as cofactor.

It carries out the reaction (R)-lactate + A = pyruvate + AH2. In terms of biological role, catalyzes the dehydrogenation of (R)-lactate (D-lactate) to pyruvate. Active in vitro with the artificial electron acceptor 2,6-dichlorophenolindophenol (DCPIP), but not with NAD, NADP, or cytochrome c. Also displays a very low oxidase activity in vitro on D-lactate and L-lactate with O2 as the electron acceptor, but this activity is most likely not physiological. This is D-lactate dehydrogenase from Anaerostipes hadrus.